Reading from the N-terminus, the 427-residue chain is Intermediate conductance calcium-activated potassium channel protein 4 (427 aa).

The chain crosses the membrane as a helical span at residues Ala29 to Phe49. A helical membrane pass occupies residues Phe59–Phe79. The helical transmembrane segment at Ile108 to Val128 threads the bilayer. The chain crosses the membrane as a helical span at residues Gly143–Val163. A helical membrane pass occupies residues Leu207–Glu227. Residues Leu241–Met261 constitute an intramembrane region (pore-forming). The chain crosses the membrane as a helical span at residues Ile265 to Val285. The calmodulin-binding stretch occupies residues Ala286–Ala347. His358 bears the Phosphohistidine mark.

The protein belongs to the potassium channel KCNN family. KCa3.1/KCNN4 subfamily. As to quaternary structure, homodimer. Homotetramer. Heterotetramer of potassium channel proteins. Interacts with MTMR6; this interaction leads to selective dephosphorylation of PI(3)P in a lipid microdomain adjacent to KCNN4, resulting in a decrease of intermediate conductance calcium-activated potassium channel activity. Interacts (via the C-tail domain) with CALM1; the calmodulin binding is constitutive, does not require calcium and mediates calcium-dependent gating and four calmodulin molecules bind to one channel tetramer. In terms of processing, phosphorylation at His-358 by NDKB activates the intermediate conductance calcium-activated potassium channel activity, and conversely it's dephosphorylation by PHPT1 inhibits this activity. As to expression, widely expressed in non-excitable tissues.

The protein resides in the cell membrane. Its subcellular location is the cell projection. It localises to the ruffle membrane. The enzyme catalyses K(+)(in) = K(+)(out). Its activity is regulated as follows. The channel is inhibited by clotrimazole and charybdotoxin but is insensitive to apamin. Its function is as follows. Intermediate conductance calcium-activated potassium channel that mediates the voltage-independent transmembrane transfer of potassium across the cell membrane through a constitutive interaction with calmodulin which binds the intracellular calcium allowing its opening. The current is characterized by a voltage-independent activation, an intracellular calcium concentration increase-dependent activation and a single-channel conductance of about 25 picosiemens. Also presents an inwardly rectifying current, thus reducing its already small outward conductance of potassium ions, which is particularly the case when the membrane potential displays positive values, above + 20 mV. Controls calcium influx during vascular contractility by being responsible of membrane hyperpolarization induced by vasoactive factors in proliferative vascular smooth muscle cell types. Following calcium influx, the consecutive activation of KCNN4 channel leads to a hyperpolarization of the cell membrane potential and hence an increase of the electrical driving force for further calcium influx promoting sustained calcium entry in response to stimulation with chemotactic peptides. Required for maximal calcium influx and proliferation during the reactivation of naive T-cells. Plays a role in the late stages of EGF-induced macropinocytosis through activation by PI(3)P. The polypeptide is Intermediate conductance calcium-activated potassium channel protein 4 (Homo sapiens (Human)).